Consider the following 251-residue polypeptide: Triosephosphate isomerase (251 aa).

Substrate is bound at residue 9–11 (NWK). His96 acts as the Electrophile in catalysis. Residue Glu168 is the Proton acceptor of the active site. Substrate is bound by residues Gly174, Ser214, and 235–236 (GG).

It belongs to the triosephosphate isomerase family. Homodimer.

The protein localises to the cytoplasm. The enzyme catalyses D-glyceraldehyde 3-phosphate = dihydroxyacetone phosphate. It participates in carbohydrate biosynthesis; gluconeogenesis. The protein operates within carbohydrate degradation; glycolysis; D-glyceraldehyde 3-phosphate from glycerone phosphate: step 1/1. Its function is as follows. Involved in the gluconeogenesis. Catalyzes stereospecifically the conversion of dihydroxyacetone phosphate (DHAP) to D-glyceraldehyde-3-phosphate (G3P). This is Triosephosphate isomerase from Porphyromonas gingivalis (strain ATCC 33277 / DSM 20709 / CIP 103683 / JCM 12257 / NCTC 11834 / 2561).